We begin with the raw amino-acid sequence, 202 residues long: Na(+)-translocating NADH-quinone reductase subunit E (202 aa).

6 helical membrane passes run 11–31 (AVFI…FIAI), 35–55 (VETA…TVPA), 79–99 (LSFL…QILE), 114–134 (GVFL…LFMV), 144–164 (VVYG…LAGI), and 180–200 (LGIT…FSGV).

Belongs to the NqrDE/RnfAE family. Composed of six subunits; NqrA, NqrB, NqrC, NqrD, NqrE and NqrF.

The protein localises to the cell inner membrane. The enzyme catalyses a ubiquinone + n Na(+)(in) + NADH + H(+) = a ubiquinol + n Na(+)(out) + NAD(+). Functionally, NQR complex catalyzes the reduction of ubiquinone-1 to ubiquinol by two successive reactions, coupled with the transport of Na(+) ions from the cytoplasm to the periplasm. NqrA to NqrE are probably involved in the second step, the conversion of ubisemiquinone to ubiquinol. The protein is Na(+)-translocating NADH-quinone reductase subunit E of Stutzerimonas stutzeri (strain A1501) (Pseudomonas stutzeri).